We begin with the raw amino-acid sequence, 456 residues long: Bifunctional protein GlmU (456 aa).

The pyrophosphorylase stretch occupies residues 1–228 (MSARLAAIVL…PQEIFGINDR (228 aa)). UDP-N-acetyl-alpha-D-glucosamine-binding positions include 10–13 (LAAG), K24, Q75, and 80–81 (GT). D105 contacts Mg(2+). UDP-N-acetyl-alpha-D-glucosamine-binding residues include G142, E157, N172, and N226. N226 provides a ligand contact to Mg(2+). The interval 229-249 (LQLSQASRILNERTLVGLMLS) is linker. Positions 250–456 (GVTIVDPLRV…KAPYERTEDG (207 aa)) are N-acetyltransferase. UDP-N-acetyl-alpha-D-glucosamine is bound by residues R331 and K349. H361 serves as the catalytic Proton acceptor. Residues Y364 and N375 each coordinate UDP-N-acetyl-alpha-D-glucosamine. Residues A378, 384-385 (NY), A421, and R437 each bind acetyl-CoA.

This sequence in the N-terminal section; belongs to the N-acetylglucosamine-1-phosphate uridyltransferase family. The protein in the C-terminal section; belongs to the transferase hexapeptide repeat family. In terms of assembly, homotrimer. The cofactor is Mg(2+).

It is found in the cytoplasm. It catalyses the reaction alpha-D-glucosamine 1-phosphate + acetyl-CoA = N-acetyl-alpha-D-glucosamine 1-phosphate + CoA + H(+). The catalysed reaction is N-acetyl-alpha-D-glucosamine 1-phosphate + UTP + H(+) = UDP-N-acetyl-alpha-D-glucosamine + diphosphate. Its pathway is nucleotide-sugar biosynthesis; UDP-N-acetyl-alpha-D-glucosamine biosynthesis; N-acetyl-alpha-D-glucosamine 1-phosphate from alpha-D-glucosamine 6-phosphate (route II): step 2/2. The protein operates within nucleotide-sugar biosynthesis; UDP-N-acetyl-alpha-D-glucosamine biosynthesis; UDP-N-acetyl-alpha-D-glucosamine from N-acetyl-alpha-D-glucosamine 1-phosphate: step 1/1. It functions in the pathway bacterial outer membrane biogenesis; LPS lipid A biosynthesis. Functionally, catalyzes the last two sequential reactions in the de novo biosynthetic pathway for UDP-N-acetylglucosamine (UDP-GlcNAc). The C-terminal domain catalyzes the transfer of acetyl group from acetyl coenzyme A to glucosamine-1-phosphate (GlcN-1-P) to produce N-acetylglucosamine-1-phosphate (GlcNAc-1-P), which is converted into UDP-GlcNAc by the transfer of uridine 5-monophosphate (from uridine 5-triphosphate), a reaction catalyzed by the N-terminal domain. The polypeptide is Bifunctional protein GlmU (Gloeobacter violaceus (strain ATCC 29082 / PCC 7421)).